A 409-amino-acid polypeptide reads, in one-letter code: Ubiquitin-associated domain-containing protein 1 (409 aa).

Met1 is subject to N-acetylmethionine. In terms of domain architecture, Ubiquitin-like spans 14–98; sequence LRLHICAADG…LLLIKKRVPS (85 aa). Positions 101–122 are disordered; the sequence is PKMADVSAEEKKKQEQKAPDKD. Residues 108 to 122 show a composition bias toward basic and acidic residues; that stretch reads AEEKKKQEQKAPDKD. The UBA 1 domain occupies 187 to 231; the sequence is DEDERVDETALRQLTEMGFPESRASKALRLNHMSVPQAMEWLIEH. The interval 239-273 is disordered; it reads TPLPGHAAQAGASAAATTSSTSSEAAVGTSVEDEE. Positions 245 to 268 are enriched in low complexity; it reads AAQAGASAAATTSSTSSEAAVGTS. Residues 292 to 332 enclose the UBA 2 domain; that stretch reads RADARAVISLMEMGFDEKEVIDALRVNNNQQNAACEWLLGD. In terms of domain architecture, STI1 spans 357-396; sequence NPVVQLGLTNPKTLLAFEDMLENPLNSTQWMNDPETGPVM.

In terms of assembly, component of the KPC complex composed of RNF123/KPC1 and UBAC1/KPC2. Interacts (via ubiquitin-like domain) with RNF123. Interacts (via ubiquitin-like and UBA domains) with the proteasome via its N-terminal domain.

The protein resides in the cytoplasm. It functions in the pathway protein modification; protein ubiquitination. Functionally, non-catalytic component of the KPC complex, a E3 ubiquitin-protein ligase complex that mediates polyubiquitination of target proteins, such as CDKN1B and NFKB1. The KPC complex catalyzes polyubiquitination and proteasome-mediated degradation of CDKN1B during G1 phase of the cell cycle. The KPC complex also acts as a key regulator of the NF-kappa-B signaling by promoting maturation of the NFKB1 component of NF-kappa-B by catalyzing ubiquitination of the NFKB1 p105 precursor. Within the KPC complex, UBAC1 acts as an adapter that promotes the transfer of target proteins that have been polyubiquitinated by RNF123/KPC1 to the 26S proteasome. In Mus musculus (Mouse), this protein is Ubiquitin-associated domain-containing protein 1 (Ubac1).